Here is a 652-residue protein sequence, read N- to C-terminus: Spermatogenesis-associated protein 13 (652 aa).

Residues 1-24 (MTSASPEDQNAPVGCPKGARRRRP) form a disordered region. Position 78 is a phosphoserine (Ser-78). Residues 81 to 108 (IGLDRVGRRRQMRASNVSSDGGTEPSAL) form a disordered region. The interval 98-150 (SSDGGTEPSALVDDNGSEEDFSYEDLCQASPRYLQPGGEQLAINELISDGNVV) is ABR (APC-binding region) domain. Ser-114 carries the phosphoserine modification. The SH3 domain maps to 147–206 (GNVVCAEALWDHVTMDDQELGFKAGDVIQVLEASNKDWWWGRSEDKEAWFPASFVRLRVN). A disordered region spans residues 209 to 235 (ELSENSSSTPSEEQDEEASQSRHRHCE). The DH domain occupies 240–424 (MRTNVIREIM…KNVACLINER (185 aa)). One can recognise a PH domain in the interval 455–561 (ELIHSGELTK…WLQACADERR (107 aa)). The tract at residues 561–652 (RRVQEDKEMG…TFNRLTPFRK (92 aa)) is C-terminal tail.

In terms of assembly, interacts (via ABR and SH3 domain) with APC. The binding of APC enhances its GEF activity by relieving it from an autoinhibitory conformation, in which the ABR and SH3 domains are associated with the C-terminal tail. Interacts (via C-terminal tail) with PPP1R9B (via C-terminus). Interacts with RAC1. Expressed at high levels in the placenta, spleen and kidney, at moderate levels in lung, small intestine, liver, brain and heart, and at low levels in skeletal muscle. Expression is aberrantly enhanced in most colorectal tumors.

The protein resides in the cytoplasm. It localises to the cell projection. The protein localises to the filopodium. Its subcellular location is the lamellipodium. It is found in the ruffle membrane. The protein resides in the podosome. With respect to regulation, both the ABR and the SH3 domains contribute to maintaining the protein in an inhibited conformation by associating with the C-terminal tail. Binding of these domains to the C-terminal tail inhibits the activity of the protein by blocking a region that is required for its GEF activity. Acts as a guanine nucleotide exchange factor (GEF) for RHOA, RAC1 and CDC42 GTPases. Regulates cell migration and adhesion assembly and disassembly through a RAC1, PI3K, RHOA and AKT1-dependent mechanism. Increases both RAC1 and CDC42 activity, but decreases the amount of active RHOA. Required for MMP9 up-regulation via the JNK signaling pathway in colorectal tumor cells. Involved in tumor angiogenesis and may play a role in intestinal adenoma formation and tumor progression. This Homo sapiens (Human) protein is Spermatogenesis-associated protein 13.